Consider the following 149-residue polypeptide: Calmodulin (149 aa).

EF-hand domains lie at 8 to 43, 44 to 79, 81 to 116, and 117 to 149; these read EQIA…LGQN, PTEA…KMKD, DSEE…LGEK, and LTDE…MMSK. Ca(2+) is bound by residues aspartate 21, aspartate 23, aspartate 25, threonine 27, glutamate 32, aspartate 57, aspartate 59, asparagine 61, threonine 63, glutamate 68, aspartate 94, aspartate 96, asparagine 98, glutamate 105, aspartate 130, aspartate 132, aspartate 134, glutamine 136, and glutamate 141.

Belongs to the calmodulin family.

In terms of biological role, calmodulin mediates the control of a large number of enzymes, ion channels and other proteins by Ca(2+). Among the enzymes to be stimulated by the calmodulin-Ca(2+) complex are a number of protein kinases and phosphatases. In Globisporangium splendens (Leaf rot fungus), this protein is Calmodulin.